The primary structure comprises 439 residues: Proline--tRNA ligase (439 aa).

The protein belongs to the class-II aminoacyl-tRNA synthetase family. ProS type 2 subfamily. As to quaternary structure, homodimer.

Its subcellular location is the cytoplasm. It catalyses the reaction tRNA(Pro) + L-proline + ATP = L-prolyl-tRNA(Pro) + AMP + diphosphate. In terms of biological role, catalyzes the attachment of proline to tRNA(Pro) in a two-step reaction: proline is first activated by ATP to form Pro-AMP and then transferred to the acceptor end of tRNA(Pro). The polypeptide is Proline--tRNA ligase (Bradyrhizobium diazoefficiens (strain JCM 10833 / BCRC 13528 / IAM 13628 / NBRC 14792 / USDA 110)).